The sequence spans 308 residues: Pantothenate synthetase (308 aa).

39-46 (MGALHDGH) contributes to the ATP binding site. Catalysis depends on histidine 46, which acts as the Proton donor. Position 71 (glutamine 71) interacts with (R)-pantoate. Residue glutamine 71 participates in beta-alanine binding. 157-160 (GEKD) contributes to the ATP binding site. Residue glutamine 163 participates in (R)-pantoate binding. ATP contacts are provided by residues valine 186 and 194–197 (MSSR). The tract at residues 286–308 (IETPAGTAGPDGDRQYAQSPWRN) is disordered.

Belongs to the pantothenate synthetase family. As to quaternary structure, homodimer.

The protein resides in the cytoplasm. It carries out the reaction (R)-pantoate + beta-alanine + ATP = (R)-pantothenate + AMP + diphosphate + H(+). The protein operates within cofactor biosynthesis; (R)-pantothenate biosynthesis; (R)-pantothenate from (R)-pantoate and beta-alanine: step 1/1. In terms of biological role, catalyzes the condensation of pantoate with beta-alanine in an ATP-dependent reaction via a pantoyl-adenylate intermediate. This Mycolicibacterium paratuberculosis (strain ATCC BAA-968 / K-10) (Mycobacterium paratuberculosis) protein is Pantothenate synthetase.